We begin with the raw amino-acid sequence, 287 residues long: Protein-export membrane protein SecF (287 aa).

The next 6 membrane-spanning stretches (helical) occupy residues 21-41, 129-149, 158-178, 182-202, 226-246, and 259-279; these read LIAI…FNGL, QIYW…FIIF, VILA…LFGI, LASV…DILL, VTMS…TVFV, and VLII…LGIL.

The protein belongs to the SecD/SecF family. SecF subfamily. In terms of assembly, part of the protein translocation apparatus. Forms a complex with SecD.

It localises to the cell membrane. Functionally, involved in protein export. The polypeptide is Protein-export membrane protein SecF (Methanothermobacter thermautotrophicus (strain ATCC 29096 / DSM 1053 / JCM 10044 / NBRC 100330 / Delta H) (Methanobacterium thermoautotrophicum)).